Reading from the N-terminus, the 228-residue chain is Transcription termination/antitermination protein NusG (228 aa).

Belongs to the NusG family.

In terms of biological role, participates in transcription elongation, termination and antitermination. The chain is Transcription termination/antitermination protein NusG from Mycobacterium leprae (strain TN).